Reading from the N-terminus, the 233-residue chain is Biosynthetic peptidoglycan transglycosylase (233 aa).

Residues Ile-17–Leu-37 form a helical membrane-spanning segment.

This sequence belongs to the glycosyltransferase 51 family.

It is found in the cell inner membrane. The catalysed reaction is [GlcNAc-(1-&gt;4)-Mur2Ac(oyl-L-Ala-gamma-D-Glu-L-Lys-D-Ala-D-Ala)](n)-di-trans,octa-cis-undecaprenyl diphosphate + beta-D-GlcNAc-(1-&gt;4)-Mur2Ac(oyl-L-Ala-gamma-D-Glu-L-Lys-D-Ala-D-Ala)-di-trans,octa-cis-undecaprenyl diphosphate = [GlcNAc-(1-&gt;4)-Mur2Ac(oyl-L-Ala-gamma-D-Glu-L-Lys-D-Ala-D-Ala)](n+1)-di-trans,octa-cis-undecaprenyl diphosphate + di-trans,octa-cis-undecaprenyl diphosphate + H(+). The protein operates within cell wall biogenesis; peptidoglycan biosynthesis. Its function is as follows. Peptidoglycan polymerase that catalyzes glycan chain elongation from lipid-linked precursors. This Rhizobium leguminosarum bv. trifolii (strain WSM2304) protein is Biosynthetic peptidoglycan transglycosylase.